Reading from the N-terminus, the 347-residue chain is Quinolinate synthase (347 aa).

Positions 47 and 68 each coordinate iminosuccinate. Cysteine 113 is a binding site for [4Fe-4S] cluster. Residues 139–141 (YAN) and serine 156 contribute to the iminosuccinate site. Cysteine 200 contributes to the [4Fe-4S] cluster binding site. Residues 226-228 (HPE) and threonine 243 each bind iminosuccinate. A [4Fe-4S] cluster-binding site is contributed by cysteine 297.

It belongs to the quinolinate synthase family. Type 1 subfamily. [4Fe-4S] cluster is required as a cofactor.

Its subcellular location is the cytoplasm. The catalysed reaction is iminosuccinate + dihydroxyacetone phosphate = quinolinate + phosphate + 2 H2O + H(+). The protein operates within cofactor biosynthesis; NAD(+) biosynthesis; quinolinate from iminoaspartate: step 1/1. Catalyzes the condensation of iminoaspartate with dihydroxyacetone phosphate to form quinolinate. This is Quinolinate synthase from Salmonella heidelberg (strain SL476).